The following is a 617-amino-acid chain: Diacylglycerol O-acyltransferase 1 (617 aa).

2 disordered regions span residues methionine 1–arginine 52 and arginine 95–glutamate 186. Residues serine 7–lysine 17 show a composition bias toward polar residues. Low complexity-rich tracts occupy residues glutamine 18–glutamine 34 and asparagine 96–threonine 105. Polar residues predominate over residues serine 106–proline 140. Low complexity predominate over residues glutamine 160–asparagine 177. Transmembrane regions (helical) follow at residues leucine 217–tyrosine 237, tryptophan 254–glutamate 274, isoleucine 306–phenylalanine 326, isoleucine 399–proline 419, and tyrosine 449–isoleucine 469. Positions phenylalanine 477–asparagine 483 match the FYXDWWN motif motif. 3 consecutive transmembrane segments (helical) span residues glycine 520 to phenylalanine 540, leucine 545 to methionine 565, and leucine 570 to tyrosine 590. Residue histidine 532 is part of the active site.

This sequence belongs to the membrane-bound acyltransferase family. Sterol o-acyltransferase subfamily.

Its subcellular location is the endoplasmic reticulum membrane. The catalysed reaction is an acyl-CoA + a 1,2-diacyl-sn-glycerol = a triacyl-sn-glycerol + CoA. It carries out the reaction all-trans-retinol + an acyl-CoA = an all-trans-retinyl ester + CoA. It catalyses the reaction 2-(9Z-octadecenoyl)-glycerol + (9Z)-octadecenoyl-CoA = 1,2-di-(9Z-octadecenoyl)-sn-glycerol + CoA. The enzyme catalyses 1,2-di-(9Z-octadecenoyl)-sn-glycerol + (9Z)-octadecenoyl-CoA = 1,2,3-tri-(9Z-octadecenoyl)-glycerol + CoA. The catalysed reaction is all-trans-retinol + hexadecanoyl-CoA = all-trans-retinyl hexadecanoate + CoA. It carries out the reaction 1-O-(9Z-octadecenyl)-glycerol + (9Z)-octadecenoyl-CoA = 1-O-(9Z-octadecyl)-3-(9Z-octadecenoyl)-glycerol + CoA. It catalyses the reaction 1-O-(9Z-octadecyl)-3-(9Z-octadecenoyl)-glycerol + (9Z)-octadecenoyl-CoA = 1-O-(9Z-octadecenyl)-2,3-di-(9Z-octadecenoyl)glycerol + CoA. The enzyme catalyses 1-(9Z-octadecenoyl)-glycerol + (9Z)-octadecenoyl-CoA = 1,2-di-(9Z-octadecenoyl)-glycerol + CoA. The catalysed reaction is 1,2-di-(9Z-octadecenoyl)-glycerol + (9Z)-octadecenoate + H(+) = 1,2,3-tri-(9Z-octadecenoyl)-glycerol + H2O. It carries out the reaction 1-octadecanoyl-2-(5Z,8Z,11Z,14Z-eicosatetraenoyl)-sn-glycerol + (9Z)-octadecenoyl-CoA = 1-octadecanoyl-2-(5Z,8Z,11Z,14Z)-eicosatetraenoyl-3-(9Z)-octadecenoyl-sn-glycerol + CoA. It catalyses the reaction hexadecane-1,2-diol + 2 hexadecanoyl-CoA = 1,2-O,O-dihexadecanoyl-1,2-hexadecanediol + 2 CoA. The enzyme catalyses hexadecane-1,2-diol + hexadecanoyl-CoA = 2-hydroxyhexadecyl hexadecanoate + CoA. The catalysed reaction is 2-(9Z-octadecenoyl)-glycerol + hexadecanoyl-CoA = 1-hexadecanoyl-2-(9Z-octadecenoyl)-sn-glycerol + CoA. It carries out the reaction 1,2-di-(9Z-octadecenoyl)-sn-glycerol + hexadecanoyl-CoA = 1,2-di-(9Z)-octadecenoyl-3-hexadecanoyl-sn-glycerol + CoA. It catalyses the reaction hexadecan-1-ol + hexadecanoyl-CoA = hexadecanyl hexadecanoate + CoA. The enzyme catalyses 13-cis-retinol + hexadecanoyl-CoA = 13-cis-retinyl hexadecanoate + CoA. The catalysed reaction is 1,3-di-(9Z-octadecenoyl)-glycerol + (9Z)-octadecenoyl-CoA = 1,2,3-tri-(9Z-octadecenoyl)-glycerol + CoA. It carries out the reaction 2,3-di-(9Z)-octadecenoyl-sn-glycerol + (9Z)-octadecenoyl-CoA = 1,2,3-tri-(9Z-octadecenoyl)-glycerol + CoA. Its pathway is lipid metabolism; glycerolipid metabolism. Catalyzes the terminal and only committed step in triacylglycerol synthesis by using diacylglycerol and fatty acyl CoA as substrates. This Dictyostelium discoideum (Social amoeba) protein is Diacylglycerol O-acyltransferase 1 (dgat1).